Consider the following 761-residue polypeptide: Putative pentatricopeptide repeat-containing protein At2g02150 (761 aa).

PPR repeat units follow at residues 141–175, 191–225, 226–260, 261–295, 296–330, 331–365, 366–400, 401–435, 436–470, 471–505, 506–540, 541–575, 576–606, 612–646, 647–681, 682–716, and 717–751; these read SVES…KADC, GFGV…RVFP, KTRS…GARP, TVFT…GLVP, DTVT…CCEP, DVIT…GLKP, NVVS…GLVP, NEYT…GVEW, NVVT…GVIP, NLAS…GIKP, DLLL…GIKA, NSLI…DIEV, TVVT…ISND, NAAI…GLVP, DRTA…GMKL, DLLA…GIHP, and DEVL…QLLT.

The protein belongs to the PPR family. P subfamily.

The chain is Putative pentatricopeptide repeat-containing protein At2g02150 from Arabidopsis thaliana (Mouse-ear cress).